A 436-amino-acid chain; its full sequence is Gamma-glutamyl phosphate reductase (436 aa).

Belongs to the gamma-glutamyl phosphate reductase family.

The protein localises to the cytoplasm. The catalysed reaction is L-glutamate 5-semialdehyde + phosphate + NADP(+) = L-glutamyl 5-phosphate + NADPH + H(+). It functions in the pathway amino-acid biosynthesis; L-proline biosynthesis; L-glutamate 5-semialdehyde from L-glutamate: step 2/2. Its function is as follows. Catalyzes the NADPH-dependent reduction of L-glutamate 5-phosphate into L-glutamate 5-semialdehyde and phosphate. The product spontaneously undergoes cyclization to form 1-pyrroline-5-carboxylate. The protein is Gamma-glutamyl phosphate reductase of Prochlorococcus marinus (strain MIT 9312).